Reading from the N-terminus, the 560-residue chain is S100P-binding protein (560 aa).

Disordered stretches follow at residues 259–292 (SDIPFDGDIDELLTLSPGDTTSSEEDKITSESTP) and 313–400 (SSSS…GKSF). Over residues 313–352 (SSSSLQLPETSLASSTEPSPSLQLSASSVTAMNGQNNSNK) the composition is skewed to polar residues. Residues 378-387 (QKVEPKKNKP) show a composition bias toward basic and acidic residues.

The protein localises to the nucleus. In Xenopus laevis (African clawed frog), this protein is S100P-binding protein (s100pbp).